The chain runs to 237 residues: Ribonuclease PH (237 aa).

Phosphate contacts are provided by residues Arg-86 and 124-126; that span reads GTR.

Belongs to the RNase PH family. In terms of assembly, homohexameric ring arranged as a trimer of dimers.

The enzyme catalyses tRNA(n+1) + phosphate = tRNA(n) + a ribonucleoside 5'-diphosphate. Its function is as follows. Phosphorolytic 3'-5' exoribonuclease that plays an important role in tRNA 3'-end maturation. Removes nucleotide residues following the 3'-CCA terminus of tRNAs; can also add nucleotides to the ends of RNA molecules by using nucleoside diphosphates as substrates, but this may not be physiologically important. Probably plays a role in initiation of 16S rRNA degradation (leading to ribosome degradation) during starvation. The sequence is that of Ribonuclease PH from Erythrobacter litoralis (strain HTCC2594).